Consider the following 260-residue polypeptide: ATP synthase subunit a (260 aa).

The propeptide at 1–11 (MQNTLLRTYIN) is removed in mature form. 6 consecutive transmembrane segments (helical) span residues 37-57 (ITTF…LYVL), 96-116 (YFPF…ISMI), 126-146 (FVFI…LSLF), 152-172 (FFSL…LVVI), 192-212 (IFSG…FVQI), and 217-237 (LILG…EFGI).

The protein belongs to the ATPase A chain family. F-type ATPases have 2 components, CF(1) - the catalytic core - and CF(0) - the membrane proton channel. CF(1) has five subunits: alpha(3), beta(3), gamma(1), delta(1), epsilon(1). CF(0) has three main subunits: a, b and c.

The protein resides in the mitochondrion inner membrane. Mitochondrial membrane ATP synthase (F(1)F(0) ATP synthase or Complex V) produces ATP from ADP in the presence of a proton gradient across the membrane which is generated by electron transport complexes of the respiratory chain. F-type ATPases consist of two structural domains, F(1) - containing the extramembraneous catalytic core and F(0) - containing the membrane proton channel, linked together by a central stalk and a peripheral stalk. During catalysis, ATP synthesis in the catalytic domain of F(1) is coupled via a rotary mechanism of the central stalk subunits to proton translocation. Key component of the proton channel; it may play a direct role in the translocation of protons across the membrane. The sequence is that of ATP synthase subunit a (ATP6) from Candida glabrata (strain ATCC 2001 / BCRC 20586 / JCM 3761 / NBRC 0622 / NRRL Y-65 / CBS 138) (Yeast).